Consider the following 345-residue polypeptide: Methylthioribose-1-phosphate isomerase (345 aa).

Substrate contacts are provided by residues 47–49 (RGA), arginine 90, and glutamine 199. The active-site Proton donor is aspartate 240. Substrate is bound at residue 250–251 (NK).

It belongs to the eIF-2B alpha/beta/delta subunits family. MtnA subfamily.

It carries out the reaction 5-(methylsulfanyl)-alpha-D-ribose 1-phosphate = 5-(methylsulfanyl)-D-ribulose 1-phosphate. Its pathway is amino-acid biosynthesis; L-methionine biosynthesis via salvage pathway; L-methionine from S-methyl-5-thio-alpha-D-ribose 1-phosphate: step 1/6. Catalyzes the interconversion of methylthioribose-1-phosphate (MTR-1-P) into methylthioribulose-1-phosphate (MTRu-1-P). The protein is Methylthioribose-1-phosphate isomerase of Crocosphaera subtropica (strain ATCC 51142 / BH68) (Cyanothece sp. (strain ATCC 51142)).